The primary structure comprises 367 residues: Probable protein phosphatase 2C 57 (367 aa).

The interval 1-29 is disordered; it reads MEEHRLGGGGGGGGGGGRPPIPGAAGRKL. Over residues 7 to 18 the composition is skewed to gly residues; it reads GGGGGGGGGGGR. Positions 67 to 331 constitute a PPM-type phosphatase domain; sequence RSGGWADIGS…DNLSVVVICF (265 aa). 4 residues coordinate Mn(2+): Asp-111, Gly-112, Asp-279, and Asp-322.

It belongs to the PP2C family. Requires Mg(2+) as cofactor. Mn(2+) serves as cofactor.

It carries out the reaction O-phospho-L-seryl-[protein] + H2O = L-seryl-[protein] + phosphate. The enzyme catalyses O-phospho-L-threonyl-[protein] + H2O = L-threonyl-[protein] + phosphate. In Oryza sativa subsp. japonica (Rice), this protein is Probable protein phosphatase 2C 57.